The primary structure comprises 843 residues: Protein P (843 aa).

Positions 1–177 (MPLSYQHFRK…FCGSPYSWEQ (177 aa)) are terminal protein domain (TP). The tract at residues 178-346 (DLQHGRLVFQ…YCLSHIVNLI (169 aa)) is spacer. Residues 219–269 (RKSRLGPQPAQGQLAGRQQGGSGSIRARVHPSPWGTVGVEPSGSGPTHNCA) form a disordered region. Low complexity predominate over residues 223–235 (LGPQPAQGQLAGR). Positions 347–690 (EDWGPCTEHG…YLNLYPVARQ (344 aa)) are polymerase/reverse transcriptase domain (RT). The Reverse transcriptase domain occupies 357–600 (EHRIRTPRTP…YSLNFMGYVI (244 aa)). Residues D429, D551, and D552 each contribute to the Mg(2+) site.

Belongs to the hepadnaviridae P protein family.

It catalyses the reaction DNA(n) + a 2'-deoxyribonucleoside 5'-triphosphate = DNA(n+1) + diphosphate. The catalysed reaction is Endonucleolytic cleavage to 5'-phosphomonoester.. Activated by host HSP70 and HSP40 in vitro to be able to bind the epsilon loop of the pgRNA. Because deletion of the RNase H region renders the protein partly chaperone-independent, the chaperones may be needed indirectly to relieve occlusion of the RNA-binding site by this domain. Inhibited by several reverse-transcriptase inhibitors: Lamivudine, Adefovir and Entecavir. Its function is as follows. Multifunctional enzyme that converts the viral RNA genome into dsDNA in viral cytoplasmic capsids. This enzyme displays a DNA polymerase activity that can copy either DNA or RNA templates, and a ribonuclease H (RNase H) activity that cleaves the RNA strand of RNA-DNA heteroduplexes in a partially processive 3'- to 5'-endonucleasic mode. Neo-synthesized pregenomic RNA (pgRNA) are encapsidated together with the P protein, and reverse-transcribed inside the nucleocapsid. Initiation of reverse-transcription occurs first by binding the epsilon loop on the pgRNA genome, and is initiated by protein priming, thereby the 5'-end of (-)DNA is covalently linked to P protein. Partial (+)DNA is synthesized from the (-)DNA template and generates the relaxed circular DNA (RC-DNA) genome. After budding and infection, the RC-DNA migrates in the nucleus, and is converted into a plasmid-like covalently closed circular DNA (cccDNA). The activity of P protein does not seem to be necessary for cccDNA generation, and is presumably released from (+)DNA by host nuclear DNA repair machinery. In Hepatitis B virus genotype B2 subtype adw (isolate China/patient4/1996) (HBV-B), this protein is Protein P.